A 245-amino-acid chain; its full sequence is 2,3-bisphosphoglycerate-dependent phosphoglycerate mutase (245 aa).

Substrate contacts are provided by residues 8-15 (RHGQSLWN), 21-22 (TG), Arg-60, 87-90 (ERHY), Lys-98, 114-115 (RR), and 183-184 (GN). The active-site Tele-phosphohistidine intermediate is His-9. The Proton donor/acceptor role is filled by Glu-87.

Belongs to the phosphoglycerate mutase family. BPG-dependent PGAM subfamily.

The enzyme catalyses (2R)-2-phosphoglycerate = (2R)-3-phosphoglycerate. The protein operates within carbohydrate degradation; glycolysis; pyruvate from D-glyceraldehyde 3-phosphate: step 3/5. Catalyzes the interconversion of 2-phosphoglycerate and 3-phosphoglycerate. The polypeptide is 2,3-bisphosphoglycerate-dependent phosphoglycerate mutase (Bacillus thuringiensis (strain Al Hakam)).